Reading from the N-terminus, the 85-residue chain is Hepcidin (85 aa).

Positions 1 to 22 (MALSTRIQAACLLLLLLASVAS) are cleaved as a signal peptide. Positions 23–54 (VSVLPHQTGQLTDLRAQDTAGAEAGLQPTLQL) are excised as a propeptide. Cystine bridges form between C67–C83, C70–C73, C71–C79, and C74–C82.

This sequence belongs to the hepcidin family. Interacts with SLC40A1; this interaction promotes SLC40A1 rapid ubiquitination.

It localises to the secreted. Its function is as follows. Liver-produced hormone that constitutes the main circulating regulator of iron absorption and distribution across tissues. Acts by promoting endocytosis and degradation of ferroportin/SLC40A1, leading to the retention of iron in iron-exporting cells and decreased flow of iron into plasma. Controls the major flows of iron into plasma: absorption of dietary iron in the intestine, recycling of iron by macrophages, which phagocytose old erythrocytes and other cells, and mobilization of stored iron from hepatocytes. Functionally, has strong antimicrobial activity against E.coli ML35P N.cinerea and weaker against S.epidermidis, S.aureus and group b streptococcus bacteria. Active against the fungus C.albicans. No activity against P.aeruginosa. The sequence is that of Hepcidin (HAMP) from Canis lupus familiaris (Dog).